We begin with the raw amino-acid sequence, 506 residues long: Protoheme IX farnesyltransferase, mitochondrial (506 aa).

The transit peptide at 1–42 (MILRSSLGRLGVARESPLCLQCLNRSRPSFPAVNKLASISRL) directs the protein to the mitochondrion. The segment covering 45–61 (TVAGQSPSSSVNKTYFS) has biased composition (polar residues). The interval 45 to 131 (TVAGQSPSSS…AEPVIPPDAS (87 aa)) is disordered. The span at 73 to 88 (PSLFTSLSPSNSPSQL) shows a compositional bias: low complexity. Polar residues predominate over residues 89–100 (NRGHSTPSTSPE). A run of 8 helical transmembrane segments spans residues 163-183 (FLVL…SILA), 199-221 (LTFL…LNMI), 247-267 (AAVF…YFGT), 269-289 (PTVT…YTPL), 297-317 (TWIG…AAAG), 337-357 (LGGW…FNAL), 390-410 (VLMF…HGFL), and 439-459 (GLFW…LVTK).

This sequence belongs to the UbiA prenyltransferase family.

It localises to the mitochondrion membrane. It carries out the reaction heme b + (2E,6E)-farnesyl diphosphate + H2O = Fe(II)-heme o + diphosphate. Its function is as follows. Converts protoheme IX and farnesyl diphosphate to heme O. This is Protoheme IX farnesyltransferase, mitochondrial (cox10) from Emericella nidulans (strain FGSC A4 / ATCC 38163 / CBS 112.46 / NRRL 194 / M139) (Aspergillus nidulans).